Reading from the N-terminus, the 469-residue chain is 3-isopropylmalate dehydratase large subunit (469 aa).

[4Fe-4S] cluster contacts are provided by Cys-347, Cys-410, and Cys-413.

It belongs to the aconitase/IPM isomerase family. LeuC type 1 subfamily. Heterodimer of LeuC and LeuD. It depends on [4Fe-4S] cluster as a cofactor.

The catalysed reaction is (2R,3S)-3-isopropylmalate = (2S)-2-isopropylmalate. It participates in amino-acid biosynthesis; L-leucine biosynthesis; L-leucine from 3-methyl-2-oxobutanoate: step 2/4. Functionally, catalyzes the isomerization between 2-isopropylmalate and 3-isopropylmalate, via the formation of 2-isopropylmaleate. The protein is 3-isopropylmalate dehydratase large subunit of Burkholderia orbicola (strain MC0-3).